Here is a 405-residue protein sequence, read N- to C-terminus: Venom serine protease 34 (405 aa).

The first 35 residues, methionine 1–threonine 35, serve as a signal peptide directing secretion. 2 disulfide bridges follow: cysteine 42–cysteine 70 and cysteine 95–cysteine 111. The region spanning cysteine 42–aspartate 147 is the CUB domain. Asparagine 113 carries an N-linked (GlcNAc...) asparagine glycan. The Peptidase S1 domain occupies isoleucine 161–proline 397. Residues cysteine 188 and cysteine 204 are joined by a disulfide bond. Histidine 203 (charge relay system) is an active-site residue. 2 N-linked (GlcNAc...) asparagine glycosylation sites follow: asparagine 209 and asparagine 229. Residue aspartate 257 is the Charge relay system of the active site. Disulfide bonds link cysteine 323-cysteine 336 and cysteine 345-cysteine 375. Serine 349 (charge relay system) is an active-site residue.

It belongs to the peptidase S1 family. As to expression, expressed by the venom duct.

The protein resides in the secreted. This Apis mellifera (Honeybee) protein is Venom serine protease 34.